We begin with the raw amino-acid sequence, 810 residues long: Coiled-coil domain-containing protein 15 (810 aa).

Coiled-coil stretches lie at residues Val-65–Arg-89, Asp-160–Thr-189, and Met-638–Arg-669.

In terms of assembly, interacts with POC5, POC1B, CETN2 and FAM161A.

It is found in the cytoplasm. The protein resides in the cytoskeleton. It localises to the microtubule organizing center. The protein localises to the centrosome. Its subcellular location is the centriole. It is found in the centriolar satellite. In terms of biological role, plays an important role in primary cilium assembly, maintenance, and length regulation. Interacts with centriole inner scaffold proteins to promote proper centriole size and integrity and assembly of functional cilia. Required for the recruitment of both the inner scaffold protein POC1B and the distal SFI1/CETN2 complex to centrioles. This is Coiled-coil domain-containing protein 15 (Ccdc15) from Mus musculus (Mouse).